Reading from the N-terminus, the 211-residue chain is Arginine exporter protein ArgO (211 aa).

6 helical membrane passes run 1-21 (MISY…PLGP), 37-57 (LMIA…GIFG), 68-88 (LLAL…LGAL), 111-131 (IIAT…DTFV), 147-167 (WFAL…ALLA), and 179-199 (AQRI…FQLA).

Belongs to the LysE/ArgO transporter (TC 2.A.75) family.

The protein localises to the cell inner membrane. It catalyses the reaction L-arginine(in) = L-arginine(out). Its function is as follows. Involved in the export of arginine. Important to control the intracellular level of arginine and the correct balance between arginine and lysine. This Salmonella enteritidis PT4 (strain P125109) protein is Arginine exporter protein ArgO.